Reading from the N-terminus, the 1186-residue chain is Trafficking protein particle complex II-specific subunit 120 homolog (1186 aa).

Disordered stretches follow at residues 777–824 and 964–984; these read PTDS…EKES and TKDP…SEKN. Polar residues predominate over residues 779–792; it reads DSDNTMSSGRNAAG. Position 971 is a phosphoserine (Ser-971). Residues 972–981 are compositionally biased toward low complexity; it reads PSSSRNPSFS.

The protein belongs to the TRS120 family. Part of the multisubunit TRAPP (transport protein particle) II complex composed of BET3, BET5, TRS20, TRS23, TRS31, TRS33, TRS65, TRS85, TRS120 and TRS130. As to expression, expressed in roots, leaves, stems and flowers.

The protein resides in the golgi apparatus. Its subcellular location is the trans-Golgi network. It is found in the early endosome. In terms of biological role, specific subunit of the TRAPP II complex, a highly conserved vesicle tethering complex that is required for the proper transport of proteins in post-Golgi trafficking pathways to the growing cell plate in mitotic active cells. Required for the polarized and selective transport of PIN2 and probably PIN1 to the plasma membrane. Not required for ER-to-Golgi as well as biosynthetic and endocytic vacuolar transport. The sequence is that of Trafficking protein particle complex II-specific subunit 120 homolog from Arabidopsis thaliana (Mouse-ear cress).